The primary structure comprises 167 residues: Small ribosomal subunit protein uS9 (167 aa).

Disordered stretches follow at residues 1–45 and 137–167; these read MSEY…GGAT and KAGFLTRDPRATERKKAGLKKARKAPQFSKR. The span at 9 to 19 shows a compositional bias: acidic residues; the sequence is DTVEDITESDE. The span at 20 to 36 shows a compositional bias: polar residues; sequence FTGTYTSESSTPATGGN. A compositionally biased stretch (basic and acidic residues) spans 143–152; that stretch reads RDPRATERKK. Over residues 153 to 167 the composition is skewed to basic residues; that stretch reads AGLKKARKAPQFSKR.

It belongs to the universal ribosomal protein uS9 family.

The chain is Small ribosomal subunit protein uS9 from Kineococcus radiotolerans (strain ATCC BAA-149 / DSM 14245 / SRS30216).